A 402-amino-acid chain; its full sequence is S-adenosylmethionine synthase (402 aa).

137–142 provides a ligand contact to ATP; it reads GQGSAD.

It belongs to the AdoMet synthase 2 family. Mg(2+) is required as a cofactor.

It catalyses the reaction L-methionine + ATP + H2O = S-adenosyl-L-methionine + phosphate + diphosphate. It participates in amino-acid biosynthesis; S-adenosyl-L-methionine biosynthesis; S-adenosyl-L-methionine from L-methionine: step 1/1. Catalyzes the formation of S-adenosylmethionine from methionine and ATP. This is S-adenosylmethionine synthase from Pyrobaculum islandicum (strain DSM 4184 / JCM 9189 / GEO3).